The sequence spans 338 residues: Acyl-CoA Delta(11) desaturase (338 aa).

The next 2 membrane-spanning stretches (helical) occupy residues 33 to 53 (IVYF…YGLY) and 61 to 81 (WATV…VTAG). Residues 83-88 (HRLWSH) carry the Histidine box-1 motif. A helical membrane pass occupies residues 97–117 (LQILLMVMNSLAFQNTVIDWV). Positions 120–124 (HRLHH) match the Histidine box-2 motif. A run of 2 helical transmembrane segments spans residues 181 to 201 (AIPF…VYGW) and 212 to 234 (AMLR…HIYG). Positions 260 to 264 (HNYHH) match the Histidine box-3 motif. The interval 318–338 (TNLWGLEDVDTPEDLKNTKGE) is disordered.

Belongs to the fatty acid desaturase type 1 family. Fe cation is required as a cofactor. In terms of tissue distribution, detected in the pheromone gland.

Its subcellular location is the membrane. The catalysed reaction is an 11,12-saturated fatty acyl-CoA + 2 Fe(II)-[cytochrome b5] + O2 + 2 H(+) = an (11Z)-Delta(11)-fatty acyl-CoA + 2 Fe(III)-[cytochrome b5] + 2 H2O. In terms of biological role, catalyzes the formation of delta(11) fatty acyl precursors in the pheromone gland, and has high activity towards palmitic acid and stearic acid. In Spodoptera littoralis (Egyptian cotton leafworm), this protein is Acyl-CoA Delta(11) desaturase.